The following is a 595-amino-acid chain: NAD-dependent protein deacetylase hst4 (595 aa).

The interval 1–106 (MAPRKTKPAT…HLDLTPRLGF (106 aa)) is disordered. Over residues 9–32 (ATKPAAKPTPASTATTSSCPSPKS) the composition is skewed to low complexity. The region spanning 109-428 (YGDQEPQLNL…SADVERVKNE (320 aa)) is the Deacetylase sirtuin-type domain. Residues 134–153 (GAGI…DGLF) and 222–225 (QNID) contribute to the NAD(+) site. The active-site Proton acceptor is His-253. Cys-261, Cys-264, Cys-283, and Cys-286 together coordinate Zn(2+). NAD(+)-binding positions include 342 to 344 (GTS), 373 to 375 (NNE), and Cys-394. Over residues 445–473 (QAQTGMLTPSSSYDGDVENASTTTLSNPA) the composition is skewed to polar residues. The segment at 445 to 595 (QAQTGMLTPS…IPKGMGKLLD (151 aa)) is disordered. 2 stretches are compositionally biased toward basic and acidic residues: residues 478–492 (KLTE…DAPK) and 530–543 (TPEE…EHKA).

It belongs to the sirtuin family. Class I subfamily. Zn(2+) is required as a cofactor.

The protein resides in the nucleus. The enzyme catalyses N(6)-acetyl-L-lysyl-[protein] + NAD(+) + H2O = 2''-O-acetyl-ADP-D-ribose + nicotinamide + L-lysyl-[protein]. In terms of biological role, NAD-dependent histone deacetylase, which could function in telomeric silencing, cell cycle progression and chromosome stability. The protein is NAD-dependent protein deacetylase hst4 of Emericella nidulans (strain FGSC A4 / ATCC 38163 / CBS 112.46 / NRRL 194 / M139) (Aspergillus nidulans).